A 143-amino-acid polypeptide reads, in one-letter code: 3-hydroxyacyl-[acyl-carrier-protein] dehydratase FabZ (143 aa).

His-49 is a catalytic residue.

It belongs to the thioester dehydratase family. FabZ subfamily.

The protein resides in the cytoplasm. It carries out the reaction a (3R)-hydroxyacyl-[ACP] = a (2E)-enoyl-[ACP] + H2O. Involved in unsaturated fatty acids biosynthesis. Catalyzes the dehydration of short chain beta-hydroxyacyl-ACPs and long chain saturated and unsaturated beta-hydroxyacyl-ACPs. This chain is 3-hydroxyacyl-[acyl-carrier-protein] dehydratase FabZ, found in Wolbachia pipientis subsp. Culex pipiens (strain wPip).